The following is a 335-amino-acid chain: Tetraacyldisaccharide 4'-kinase (335 aa).

Position 58 to 65 (58 to 65) interacts with ATP; it reads TVGGSGKT.

The protein belongs to the LpxK family.

It catalyses the reaction a lipid A disaccharide + ATP = a lipid IVA + ADP + H(+). Its pathway is glycolipid biosynthesis; lipid IV(A) biosynthesis; lipid IV(A) from (3R)-3-hydroxytetradecanoyl-[acyl-carrier-protein] and UDP-N-acetyl-alpha-D-glucosamine: step 6/6. Its function is as follows. Transfers the gamma-phosphate of ATP to the 4'-position of a tetraacyldisaccharide 1-phosphate intermediate (termed DS-1-P) to form tetraacyldisaccharide 1,4'-bis-phosphate (lipid IVA). In Shewanella oneidensis (strain ATCC 700550 / JCM 31522 / CIP 106686 / LMG 19005 / NCIMB 14063 / MR-1), this protein is Tetraacyldisaccharide 4'-kinase.